The primary structure comprises 354 residues: Neuronal growth regulator 1 (354 aa).

An N-terminal signal peptide occupies residues 1–37 (MDMMLLVQGACCSNQWLAAVLLSLCCLLPSCLPAGQS). Ig-like C2-type domains follow at residues 38–134 (VDFP…VHLT), 139–221 (PKIY…KVVV), and 225–313 (PTIQ…LPLN). Cys-60 and Cys-118 are disulfide-bonded. N-linked (GlcNAc...) asparagine glycans are attached at residues Asn-73 and Asn-155. 2 cysteine pairs are disulfide-bonded: Cys-160–Cys-203 and Cys-245–Cys-297. Tyr-187 bears the Phosphotyrosine mark. N-linked (GlcNAc...) asparagine glycans are attached at residues Asn-275, Asn-286, Asn-294, and Asn-307. Residue Gly-324 is the site of GPI-anchor amidated glycine attachment. A propeptide spans 325-354 (SADVLFSCWYLVLTLSSFTSIFYLKNAILQ) (removed in mature form).

Belongs to the immunoglobulin superfamily. IgLON family.

Its subcellular location is the cell membrane. May be involved in cell-adhesion. May function as a trans-neural growth-promoting factor in regenerative axon sprouting in the mammalian brain. This is Neuronal growth regulator 1 (NEGR1) from Pongo abelii (Sumatran orangutan).